Consider the following 420-residue polypeptide: Fasciclin-like arabinogalactan protein 8 (420 aa).

Positions 1–25 (MAASQTFSLLAFTFSLLAFASTVSS) are cleaved as a signal peptide. 2 FAS1 domains span residues 26–172 (HNIT…DAPI) and 186–326 (SLSN…DNVL). 5 N-linked (GlcNAc...) asparagine glycosylation sites follow: N27, N128, N162, N189, and N273. Residues 335–394 (SKSPSPAPAPEPVTAPTPSPADAPSPTAASPPAPPTDESPESAPSDSPTGSANSKSANAA) form a disordered region. Over residues 339-371 (SPAPAPEPVTAPTPSPADAPSPTAASPPAPPTD) the composition is skewed to pro residues. N392 carries GPI-anchor amidated asparagine lipidation. A propeptide spans 393-420 (AAVGVSTPSLFTALVTIAAIAVSVSLCS) (removed in mature form).

It belongs to the fasciclin-like AGP family. As to expression, expressed mainly in flowers and to a lesser extent in leaves and roots.

The protein resides in the cell membrane. Its function is as follows. May be a cell surface adhesion protein. The polypeptide is Fasciclin-like arabinogalactan protein 8 (FLA8) (Arabidopsis thaliana (Mouse-ear cress)).